The primary structure comprises 371 residues: Conglutinin (371 aa).

Residues 1–20 (MLLLPLSVLLLLTQPWRSLG) form the signal peptide. The 171-residue stretch at 46 to 216 (GLPGHDGQDG…TGAKGESGLA (171 aa)) folds into the Collagen-like domain. Positions 47-215 (LPGHDGQDGR…ETGAKGESGL (169 aa)) are disordered. Residues 51-65 (DGQDGRECPHGEKGD) show a composition bias toward basic and acidic residues. Lys-63 is subject to 5-hydroxylysine. The segment covering 71–83 (PAGRAGRPGWVGP) has biased composition (low complexity). Pro-78 is subject to 4-hydroxyproline. 5-hydroxylysine is present on Lys-87. Pro-96 is modified (4-hydroxyproline). Lys-99 bears the 5-hydroxylysine mark. Pro-108, Pro-111, Pro-129, and Pro-132 each carry 4-hydroxyproline. A 5-hydroxylysine mark is found at Lys-135 and Lys-141. Positions 139 to 148 (GPKGGVGAPG) are enriched in gly residues. 4-hydroxyproline is present on residues Pro-147 and Pro-153. A 5-hydroxylysine mark is found at Lys-159 and Lys-162. A 4-hydroxyproline mark is found at Pro-171 and Pro-195. Lys-198 bears the 5-hydroxylysine mark. Residues 201–203 (RGD) carry the Cell attachment site motif. One can recognise a C-type lectin domain in the interval 273 to 371 (QLCREAKGQL…SKQLLVICEF (99 aa)). 2 disulfide bridges follow: Cys-275–Cys-369 and Cys-347–Cys-361. Residue Asn-337 is glycosylated (N-linked (GlcNAc...) asparagine).

It belongs to the SFTPD family. As to quaternary structure, oligomeric complex of 4 set of homotrimers. Post-translationally, the hydroxylysines may be O-glycosylated.

In terms of biological role, calcium-dependent lectin-like protein which binds to a yeast cell wall extract and immune complexes through the complement component (C3bi). It is capable of binding non-reducing terminal N-acetylglucosamine, mannose, and fucose residues. This Bos taurus (Bovine) protein is Conglutinin (CGN1).